A 550-amino-acid chain; its full sequence is Solute carrier family 22 member 11 (550 aa).

The Cytoplasmic segment spans residues 1–10 (MAFSKLLEQA). The helical transmembrane segment at 11-31 (GGVGLFQTLQVLTFILPCLMI) threads the bilayer. Residues 32–142 (PSQMLLENFS…DLVCSSQGLK (111 aa)) are Extracellular-facing. Residues N39, N56, and N99 are each glycosylated (N-linked (GlcNAc...) asparagine). Residues 143-163 (PLSQSIFMSGILVGSFIWGLL) traverse the membrane as a helical segment. The Cytoplasmic segment spans residues 164–174 (SYRFGRKPMLS). Residues 175-195 (WCCLQLAVAGTSTIFAPTFVI) form a helical membrane-spanning segment. At 196-200 (YCGLR) the chain is on the extracellular side. The helical transmembrane segment at 201-221 (FVAAFGMAGIFLSSLTLMVEW) threads the bilayer. Over 222–231 (TTTSRRAVTM) the chain is Cytoplasmic. A helical membrane pass occupies residues 232–252 (TVVGCAFSAGQAALGGLAFAL). Residues 253-256 (RDWR) are Extracellular-facing. Residues 257-277 (TLQLAASVPFFAISLISWWLP) traverse the membrane as a helical segment. The Cytoplasmic portion of the chain corresponds to 278-346 (ESARWLIIKG…FCVPVLRWRS (69 aa)). Residues 347 to 367 (CAMLVVNFSLLISYYGLVFDL) traverse the membrane as a helical segment. Residues 368–378 (QSLGRDIFLLQ) are Extracellular-facing. A helical transmembrane segment spans residues 379–399 (ALFGAVDFLGRATTALLLSFL). Over 400–402 (GRR) the chain is Cytoplasmic. Residues 403-423 (TIQAGSQAMAGLAILANMLVP) form a helical membrane-spanning segment. At 424-430 (QDLQTLR) the chain is on the extracellular side. A helical membrane pass occupies residues 431-451 (VVFAVLGKGCFGISLTCLTIY). The Cytoplasmic segment spans residues 452 to 463 (KAELFPTPVRMT). The helical transmembrane segment at 464–484 (ADGILHTVGRLGAMMGPLILM) threads the bilayer. At 485-490 (SRQALP) the chain is on the extracellular side. Residues 491–511 (LLPPLLYGVISIASSLVVLFF) traverse the membrane as a helical segment. The Cytoplasmic portion of the chain corresponds to 512 to 550 (LPETQGLPLPDTIQDLESQKSTAAQGNRQEAVTVESTSL). Positions 531–550 (KSTAAQGNRQEAVTVESTSL) are disordered.

It belongs to the major facilitator (TC 2.A.1) superfamily. Organic cation transporter (TC 2.A.1.19) family. In terms of processing, N-glycosylated. Contains several complex-type N-glycans. In terms of tissue distribution, expressed in placental trophoblasts, syncytiotrophoblast and cytotrophoblast. Also located in the proximal tubules in kidneys.

It is found in the cell membrane. Its subcellular location is the apical cell membrane. It localises to the basal cell membrane. The catalysed reaction is estrone 3-sulfate(out) + glutarate(in) = estrone 3-sulfate(in) + glutarate(out). The enzyme catalyses dehydroepiandrosterone 3-sulfate(out) = dehydroepiandrosterone 3-sulfate(in). It catalyses the reaction prostaglandin F2alpha(out) = prostaglandin F2alpha(in). It carries out the reaction prostaglandin E2(out) = prostaglandin E2(in). In terms of biological role, antiporter that mediates the transport of conjugated steroids and other specific organic anions at the basal membrane of syncytiotrophoblast and at the apical membrane of proximal tubule epithelial cells, in exchange for anionic compounds. May be responsible for placental absorption of fetal-derived steroid sulfates such as estrone sulfate (E1S) and the steroid hormone precursor dehydroepiandrosterone sulfate (DHEA-S), as well as clearing waste products and xenobiotics from the fetus. Maybe also be involved in placental urate homeostasis. Facilitates the renal reabsorption of organic anions such as urate and derived steroid sulfates. Organic anion glutarate acts as conteranion for E1S renal uptake. Possible transport mode may also include DHEA-S/E1S exchange. Also interacts with inorganic anions such as chloride and hydroxyl ions, therefore possible transport modes may include E1S/Cl(-), E1S/OH(-), urate/Cl(-) and urate/OH(-). Also mediates the transport of prostaglandin E2 (PGE2) and prostaglandin F2-alpha (PGF2-alpha) and may be involved in their renal excretion. Also able to uptake anionic drugs, diuretics, bile salts and ochratoxin A. Mediates the unidirectional efflux of glutamate and aspartate. Glutamate efflux down its transmembrane gradient may drive SLC22A11/OAT4-mediated placental uptake of E1S. The chain is Solute carrier family 22 member 11 from Homo sapiens (Human).